A 200-amino-acid polypeptide reads, in one-letter code: Pre-mRNA cleavage factor Im 25 kDa subunit 2 (200 aa).

The 128-residue stretch at 45-172 (GMRTSVEGIL…KLLAVPLFEL (128 aa)) folds into the Nudix hydrolase domain. The interaction with RNA stretch occupies residues 72–74 (TFC). Residues 79 to 100 (GRLKPGENEADGLKRKLTSKLG) carry the Nudix box motif.

It belongs to the Nudix hydrolase family. CPSF5 subfamily. As to quaternary structure, homodimer. Component of the cleavage factor Im (CFIm) complex. Forms a complex with cleavage and polyadenylation specificity factor (CPSF) subunits FIPS5, PAPS4 and CPSF30.

It localises to the nucleus. In terms of biological role, component of the cleavage factor Im (CFIm) complex that plays a key role in pre-mRNA 3'-processing. Involved in association with CPSF6 or CPSF7 in pre-MRNA 3'-end poly(A) site cleavage and poly(A) addition. NUDT21/CPSF5 binds to cleavage and polyadenylation RNA substrates. The homodimer mediates simultaneous sequence-specific recognition of two 5'-UGUA-3' elements within the pre-mRNA. Binds to, but does not hydrolyze mono- and di-adenosine nucleotides. May have a role in mRNA export. The protein is Pre-mRNA cleavage factor Im 25 kDa subunit 2 of Arabidopsis thaliana (Mouse-ear cress).